Reading from the N-terminus, the 90-residue chain is Large ribosomal subunit protein bL27 (90 aa).

The segment at 1–20 (MAHKKAGGSSRNGRDSAGKR) is disordered.

It belongs to the bacterial ribosomal protein bL27 family.

The sequence is that of Large ribosomal subunit protein bL27 from Rhodopseudomonas palustris (strain ATCC BAA-98 / CGA009).